A 389-amino-acid polypeptide reads, in one-letter code: MAGCKVLFFLILALAITFVSAARLLDEEEDIGLVPLPTTSPGPLPTVGLGPFPTANSGPATGIASGTGSASGGLGSLGTNTGPGPLSTTGSSLLPVASSGTLPVTGPGPLPTSSGLLPGASSGNLPGSGSGPLPTVGSGAAATGLGAGAGSVIGGSVPDNTLVFFMHDILGGSNPTARAVTGVVANAALSGQIPFAKPNGANLPVSNGVPSDNNNNGILNNNNVPLLVGLGGTTSNILQNNGNNMLNGLPVANGGQLPSGSSLQMLMFGTLTVMDNELTEGHELGSGLLGKAQGFYVASALDGTSQTMAFTAMFESGGYEDSISFFGVHRTAASESHLGVMGGTGKYVNARGFAIVKTFTGSSGTQQQQPHQFTDGLETVLECTVYLSY.

The first 21 residues, 1–21 (MAGCKVLFFLILALAITFVSA), serve as a signal peptide directing secretion. 3 stretches are compositionally biased toward low complexity: residues 50-68 (GPFPTANSGPATGIASGTG), 77-86 (LGTNTGPGPL), and 98-135 (SSGTLPVTGPGPLPTSSGLLPGASSGNLPGSGSGPLPT). A disordered region spans residues 50–135 (GPFPTANSGP…PGSGSGPLPT (86 aa)).

This sequence belongs to the plant dirigent protein family. As to quaternary structure, homodimer.

It is found in the secreted. It localises to the extracellular space. The protein localises to the apoplast. Its function is as follows. Dirigent proteins impart stereoselectivity on the phenoxy radical-coupling reaction, yielding optically active lignans from two molecules of coniferyl alcohol in the biosynthesis of lignans, flavonolignans, and alkaloids and thus plays a central role in plant secondary metabolism. The chain is Dirigent protein 25 (DIR25) from Arabidopsis thaliana (Mouse-ear cress).